A 239-amino-acid chain; its full sequence is MNDPRIIVALDFPDSTSALDLVARLDPSLCRLKVGKELFTAAGPQLVEKMMGKGFEIFLDLKFHDIPTTVANACRTAAALGVWMMNVHALGGRRMLAAAREAVPPGSVRLIAVTLLTSMDQSDLDEVGLKGEPQDVVQRLAALTRDCGLDGVVCSPLETSRLRNAIGADFCLVTPGIRPADSSPDEQRRISTPRQAIENGADYLVIGRPITQATEPAVMLSRLNKDIEDIRDVSRFDNF.

Substrate is bound by residues D11, K33, 60–69 (DLKFHDIPTT), T117, R178, Q187, G207, and R208. The Proton donor role is filled by K62.

Belongs to the OMP decarboxylase family. Type 1 subfamily. As to quaternary structure, homodimer.

The catalysed reaction is orotidine 5'-phosphate + H(+) = UMP + CO2. It functions in the pathway pyrimidine metabolism; UMP biosynthesis via de novo pathway; UMP from orotate: step 2/2. In terms of biological role, catalyzes the decarboxylation of orotidine 5'-monophosphate (OMP) to uridine 5'-monophosphate (UMP). The sequence is that of Orotidine 5'-phosphate decarboxylase from Nitrosospira multiformis (strain ATCC 25196 / NCIMB 11849 / C 71).